We begin with the raw amino-acid sequence, 47 residues long: Sperm protamine P1 (47 aa).

Belongs to the protamine P1 family. In terms of tissue distribution, testis.

It is found in the nucleus. The protein localises to the chromosome. Its function is as follows. Protamines substitute for histones in the chromatin of sperm during the haploid phase of spermatogenesis. They compact sperm DNA into a highly condensed, stable and inactive complex. The protein is Sperm protamine P1 (PRM1) of Galeopterus variegatus (Malayan flying lemur).